The primary structure comprises 320 residues: UV DNA damage endonuclease (320 aa).

Belongs to the uve1/UvsE family.

Functionally, component in a DNA repair pathway. Removal of UV LIGHT damaged nucleotides. Recognizes pyrimidine dimers and cleave a phosphodiester bond immediately 5' to the lesion. This chain is UV DNA damage endonuclease, found in Bacillus pumilus (strain SAFR-032).